Consider the following 162-residue polypeptide: MNTKFPITAKGFEKLEHELKHLKHVERKKISEDIAEAREHGDLSENAEYEAAREKQAFIEGRIKELEDMTARAEIIDIGKLSGDNIKFGATVTLIDDDTEEEVTYIIVGEYEADITRKRVSIASPIAKALIGKSVGDFVEVTTPKGSKSYEVVTVEYKELEL.

Residues 45 to 74 adopt a coiled-coil conformation; sequence ENAEYEAAREKQAFIEGRIKELEDMTARAE.

It belongs to the GreA/GreB family.

Its function is as follows. Necessary for efficient RNA polymerase transcription elongation past template-encoded arresting sites. The arresting sites in DNA have the property of trapping a certain fraction of elongating RNA polymerases that pass through, resulting in locked ternary complexes. Cleavage of the nascent transcript by cleavage factors such as GreA or GreB allows the resumption of elongation from the new 3'terminus. GreA releases sequences of 2 to 3 nucleotides. In Rickettsia felis (strain ATCC VR-1525 / URRWXCal2) (Rickettsia azadi), this protein is Transcription elongation factor GreA.